A 141-amino-acid polypeptide reads, in one-letter code: 6,7-dimethyl-8-ribityllumazine synthase (141 aa).

5-amino-6-(D-ribitylamino)uracil contacts are provided by residues phenylalanine 13, 45 to 47 (SFE), and 69 to 71 (AII). (2S)-2-hydroxy-3-oxobutyl phosphate is bound at residue 74 to 75 (DT). Histidine 77 acts as the Proton donor in catalysis. 5-amino-6-(D-ribitylamino)uracil is bound at residue leucine 102. Residue arginine 117 participates in (2S)-2-hydroxy-3-oxobutyl phosphate binding.

This sequence belongs to the DMRL synthase family.

The catalysed reaction is (2S)-2-hydroxy-3-oxobutyl phosphate + 5-amino-6-(D-ribitylamino)uracil = 6,7-dimethyl-8-(1-D-ribityl)lumazine + phosphate + 2 H2O + H(+). It participates in cofactor biosynthesis; riboflavin biosynthesis; riboflavin from 2-hydroxy-3-oxobutyl phosphate and 5-amino-6-(D-ribitylamino)uracil: step 1/2. In terms of biological role, catalyzes the formation of 6,7-dimethyl-8-ribityllumazine by condensation of 5-amino-6-(D-ribitylamino)uracil with 3,4-dihydroxy-2-butanone 4-phosphate. This is the penultimate step in the biosynthesis of riboflavin. The protein is 6,7-dimethyl-8-ribityllumazine synthase of Methanopyrus kandleri (strain AV19 / DSM 6324 / JCM 9639 / NBRC 100938).